Reading from the N-terminus, the 238-residue chain is MTTYATDSQGKFIPATQRPDGTWRKPRRVRDGYVPQEEVPLYESKGKLFAQKPSLPPGLPPEMAQKAREKREKEQRKAAARPAQNPVPGLLILHEDNKANQRQAKPANAKPKKKAVELPDVLLEQKQKEEQKAASRQQAQDQRNSKQQQSQNQSKPLDDVTKAVQDLQLGTASGADGHSDLSKKLRKLRKKIREIEVIEERLRASDGPRPDKDQIEKAKRKAEILKEIEELERGGGHK.

The tract at residues 1-183 is disordered; sequence MTTYATDSQG…GADGHSDLSK (183 aa). Basic and acidic residues-rich tracts occupy residues 65-77 and 123-133; these read QKAREKREKEQRK and LEQKQKEEQKA. Low complexity predominate over residues 136-155; it reads RQQAQDQRNSKQQQSQNQSK. Positions 176–233 form a coiled coil; it reads DGHSDLSKKLRKLRKKIREIEVIEERLRASDGPRPDKDQIEKAKRKAEILKEIEELER.

It belongs to the pym family. In terms of assembly, interacts (via N-terminus) with mago and tsu/Y14; the interaction is direct.

The protein resides in the cytoplasm. Its subcellular location is the nucleus. Its function is as follows. Regulator of the exon junction complex (EJC), a multiprotein complex that associates immediately upstream of the exon-exon junction on mRNAs and serves as a positional landmarks for the intron exon structure of genes and directs post-transcriptional processes in the cytoplasm such as mRNA export, nonsense-mediated mRNA decay (NMD) or translation. This is Partner of Y14 and mago from Culex quinquefasciatus (Southern house mosquito).